An 89-amino-acid chain; its full sequence is HssA/B-like protein 22 (89 aa).

Belongs to the hssA/B family.

The polypeptide is HssA/B-like protein 22 (hssl22) (Dictyostelium discoideum (Social amoeba)).